The sequence spans 310 residues: Nucleotide-binding protein Ddes_0972 (310 aa).

30–37 lines the ATP pocket; it reads GLSGAGKS. GTP is bound at residue 82-85; it reads DLRQ.

This sequence belongs to the RapZ-like family.

Functionally, displays ATPase and GTPase activities. In Desulfovibrio desulfuricans (strain ATCC 27774 / DSM 6949 / MB), this protein is Nucleotide-binding protein Ddes_0972.